Reading from the N-terminus, the 85-residue chain is Large ribosomal subunit protein bL27 (85 aa).

Residues 1-22 (MAHKKAGGSTKNGRDSESKRLG) form a disordered region.

This sequence belongs to the bacterial ribosomal protein bL27 family.

This is Large ribosomal subunit protein bL27 from Idiomarina loihiensis (strain ATCC BAA-735 / DSM 15497 / L2-TR).